Reading from the N-terminus, the 371-residue chain is uncharacterized protein (371 aa).

The next 7 membrane-spanning stretches (helical) occupy residues 9–29 (FTLD…VFLI), 58–78 (VLAF…FLAI), 98–118 (LIVA…SFIF), 133–153 (LAPF…VSVI), 159–179 (YDVN…ALAA), 183–203 (ISNF…IGDW), and 330–350 (IIEI…MVVV).

This sequence belongs to the MscS (TC 1.A.23) family.

It localises to the cell membrane. In terms of biological role, may play a role in resistance to osmotic downshock. This is an uncharacterized protein from Bacillus subtilis (strain 168).